We begin with the raw amino-acid sequence, 544 residues long: GDP-mannose 4,6-dehydratase sdnI (544 aa).

NADP(+)-binding positions include 16–21, R41, 64–65, and 86–90; these read GITGQD, DM, and LAAQS. S90 is a substrate binding site. Active-site nucleophile residues include E135 and Y157. Y157 is a binding site for substrate. Residue K161 participates in NADP(+) binding. N186 is a binding site for substrate. 2 residues coordinate NADP(+): H187 and R192. Substrate contacts are provided by residues 192-200, G219, R225, and 303-306; these read RGTTFVTRK and RPVE. The interval 366 to 406 is disordered; the sequence is GETTSAVNSSPSSTAGDTYKASDGWSTSGAEGSEQTECSSV. 2 stretches are compositionally biased toward polar residues: residues 368–381 and 389–404; these read TTSAVNSSPSSTAG and GWSTSGAEGSEQTECS.

It belongs to the NAD(P)-dependent epimerase/dehydratase family. GDP-mannose 4,6-dehydratase subfamily. Requires NADP(+) as cofactor.

The catalysed reaction is GDP-alpha-D-mannose = GDP-4-dehydro-alpha-D-rhamnose + H2O. It participates in antibiotic biosynthesis. GDP-mannose 4,6-dehydratase; part of the gene cluster that mediates the biosynthesis of sordarin and hypoxysordarin, glycoside antibiotics with a unique tetracyclic diterpene aglycone structure. First, the geranylgeranyl diphosphate synthase sdnC constructs GGDP from farnesyl diphosphate and isopentenyl diphosphate. The diterpene cyclase sdnA then catalyzes the cyclization of GGDP to afford cycloaraneosene. Cycloaraneosene is then hydroxylated four times by the putative cytochrome P450 monooxygenases sdnB, sdnE, sdnF and sdnH to give a hydroxylated cycloaraneosene derivative such as cycloaraneosene-8,9,13,19-tetraol. Although the order of the hydroxylations is unclear, at least C8, C9 and C13 of the cycloaraneosene skeleton are hydroxylated before the sordaricin formation. Dehydration of the 13-hydroxy group of the hydroxylated cycloaraneosene derivative might be catalyzed by an unassigned hypothetical protein such as sdnG and sdnP to construct the cyclopentadiene moiety. The FAD-dependent oxidoreductase sdnN is proposed to catalyze the oxidation at C9 of the hydroxylated cycloaraneosene derivative and also catalyze the Baeyer-Villiger oxidation to give the lactone intermediate. The presumed lactone intermediate would be hydrolyzed to give an acrolein moiety and a carboxylate moiety. Then, [4+2]cycloaddition would occur between the acrolein moiety and the cyclopentadiene moiety to give sordaricin. SdnN might also be involved in the [4+2]cycloaddition after the hypothesized oxidation to accommodate the oxidized product and prompt the [4+2]cycloaddition. GDP-6-deoxy-D-altrose may be biosynthesized from GDP-D-mannose by the putative GDP-mannose-4,6-dehydratase sdnI and the short-chain dehydrogenase sdnK. The glycosyltransferase sdnJ catalyzes the attachment of 6-deoxy-D-altrose onto the 19-hydroxy group of sordaricin to give 4'-O-demethylsordarin. The methyltransferase sdnD would complete the biosynthesis of sordarin. Sordarin can be further modified into hypoxysordarin. The unique acyl chain at the 3'-hydroxy group of hypoxysordarin would be constructed by an iterative type I PKS sdnO and the trans-acting polyketide methyltransferase sdnL. SdnL would be responsible for the introduction of an alpha-methyl group of the polyketide chain. Alternatively, the beta-lactamase-like protein sdnR might be responsible for the cleavage and transfer of the polyketide chain from the PKS sdnO to sordarin. Two putative cytochrome P450 monooxygenases, sdnQ and sdnT, might catalyze the epoxidations of the polyketide chain to complete the biosynthesis of hypoxysordarin. Transcriptional regulators sdnM and sdnS are presumably encoded for the transcriptional regulation of the expression of the sdn gene cluster. This Sordaria araneosa (Pleurage araneosa) protein is GDP-mannose 4,6-dehydratase sdnI.